Here is a 129-residue protein sequence, read N- to C-terminus: Large ribosomal subunit protein bL19 (129 aa).

Belongs to the bacterial ribosomal protein bL19 family.

Its function is as follows. This protein is located at the 30S-50S ribosomal subunit interface and may play a role in the structure and function of the aminoacyl-tRNA binding site. The polypeptide is Large ribosomal subunit protein bL19 (Methylobacillus flagellatus (strain ATCC 51484 / DSM 6875 / VKM B-1610 / KT)).